Consider the following 480-residue polypeptide: 6-phosphogluconate dehydrogenase, decarboxylating 1 (480 aa).

Residues 10–15 (GLAVMG), 33–35 (NRT), 77–79 (VKA), and N105 contribute to the NADP(+) site. Residues N105 and 131-133 (SGG) contribute to the substrate site. K186 (proton acceptor) is an active-site residue. Residue 189–190 (HN) participates in substrate binding. E193 acts as the Proton donor in catalysis. Substrate contacts are provided by Y194, K264, R291, R450, and H456.

This sequence belongs to the 6-phosphogluconate dehydrogenase family. In terms of assembly, homodimer. As to expression, highly expressed in inflorescence, lowly expressed in root and embryos and almost absent in leaves.

It is found in the cytoplasm. The catalysed reaction is 6-phospho-D-gluconate + NADP(+) = D-ribulose 5-phosphate + CO2 + NADPH. The protein operates within carbohydrate degradation; pentose phosphate pathway; D-ribulose 5-phosphate from D-glucose 6-phosphate (oxidative stage): step 3/3. Catalyzes the oxidative decarboxylation of 6-phosphogluconate to ribulose 5-phosphate and CO(2), with concomitant reduction of NADP to NADPH. The polypeptide is 6-phosphogluconate dehydrogenase, decarboxylating 1 (G6PGH1) (Oryza sativa subsp. japonica (Rice)).